The chain runs to 360 residues: DNA integrity scanning protein DisA (360 aa).

The DAC domain maps to 11–149; that stretch reads ELDLSSILQF…ENMKYTLKDI (139 aa). ATP is bound by residues G78, L96, and 109–113; that span reads MRHRT.

Belongs to the DisA family. In terms of assembly, homooligomer. Interacts with RadA. Mg(2+) serves as cofactor.

Its subcellular location is the cytoplasm. It catalyses the reaction 2 ATP = 3',3'-c-di-AMP + 2 diphosphate. Diadenylate cyclase (DAC) activity is inhibited 2-fold by Holliday junction (HJ) DNA, further addition of RecG inhibits DAC activity 11-fold; RecG may relocate DisA from the HJ. DAC is inhibited by the interaction with RadA. Diadenylate cyclase activity is not affected by ssDNA or dsDNA, but three- and four-way junctions strongly inhibit the activity of DisA, suggesting the enzyme is regulated by branched nucleic acids. Its function is as follows. Participates in a DNA-damage check-point that is active prior to asymmetric division when DNA is damaged. Forms globular foci that rapidly scan along the chromosomes during sporulation, searching for lesions. Its ability to scan through the chromosome rapidly is due to its non-specific DNA-binding. When a lesion is present, DisA pauses at the lesion site. This triggers a cellular response that culminates in a temporary block in sporulation initiation. It is required, at least partially, to inhibit the activity of the transcription factor spo0A, which controls, among others, early sporulation genes. In B.subtilis c-di-AMP is a second messenger that mediates growth, DNA repair and cell wall homeostasis; it is toxic when present in excess. Limits the replication fork reggression activity of RecG; DisA inhibits the ATPase activity of RecG. By limiting RecG-mediated fork regression, DisA provides time for removal of potentially lethal DNA lesions. One of 3 paralogous diadenylate cyclases (DAC) in this bacteria. Has diadenylate cyclase activity, catalyzing the condensation of 2 ATP molecules into cyclic di-AMP (c-di-AMP). c-di-AMP acts as a signaling molecule that couples DNA integrity with progression of sporulation. The rise in c-di-AMP level generated by DisA while scanning the chromosome operates as a positive signal that advances sporulation; upon encountering a lesion, the DisA focus arrests at the damaged site and halts c-di-AMP synthesis. Does not convert GTP to c-di-GMP. This Bacillus subtilis (strain 168) protein is DNA integrity scanning protein DisA.